We begin with the raw amino-acid sequence, 256 residues long: Thiazole synthase (256 aa).

Lys95 functions as the Schiff-base intermediate with DXP in the catalytic mechanism. Residues Gly156, Ala182 to Gly183, and Asn204 to Thr205 contribute to the 1-deoxy-D-xylulose 5-phosphate site.

It belongs to the ThiG family. In terms of assembly, homotetramer. Forms heterodimers with either ThiH or ThiS.

The protein resides in the cytoplasm. The enzyme catalyses [ThiS sulfur-carrier protein]-C-terminal-Gly-aminoethanethioate + 2-iminoacetate + 1-deoxy-D-xylulose 5-phosphate = [ThiS sulfur-carrier protein]-C-terminal Gly-Gly + 2-[(2R,5Z)-2-carboxy-4-methylthiazol-5(2H)-ylidene]ethyl phosphate + 2 H2O + H(+). The protein operates within cofactor biosynthesis; thiamine diphosphate biosynthesis. Catalyzes the rearrangement of 1-deoxy-D-xylulose 5-phosphate (DXP) to produce the thiazole phosphate moiety of thiamine. Sulfur is provided by the thiocarboxylate moiety of the carrier protein ThiS. In vitro, sulfur can be provided by H(2)S. This is Thiazole synthase from Shigella dysenteriae serotype 1 (strain Sd197).